A 228-amino-acid chain; its full sequence is UPF0173 metal-dependent hydrolase Dred_1740 (228 aa).

It belongs to the UPF0173 family.

In Desulforamulus reducens (strain ATCC BAA-1160 / DSM 100696 / MI-1) (Desulfotomaculum reducens), this protein is UPF0173 metal-dependent hydrolase Dred_1740.